The chain runs to 487 residues: Acetylcholine receptor subunit beta-type acr-3 (487 aa).

The signal sequence occupies residues 1–20 (MQKIWLFSIITIFLITELQC). Over 21–231 (YPNSAEERLL…KIRRKALFYT (211 aa)) the chain is Extracellular. Asparagine 46 carries an N-linked (GlcNAc...) asparagine glycan. A disulfide bridge links cysteine 151 with cysteine 165. Transmembrane regions (helical) follow at residues 232-252 (VILI…FYLP), 259-279 (ITLA…VSKI), and 294-314 (LLMT…IINV). At 315–439 (YFRGPATHIM…WKFVSVVIDR (125 aa)) the chain is on the cytoplasmic side. The segment at 380 to 400 (ISEQPKQTSRKDGSSSEEKLS) is disordered. Residues 440 to 460 (LLLYLFFAVTTGGTVGILLSA) form a helical membrane-spanning segment.

It belongs to the ligand-gated ion channel (TC 1.A.9) family. Acetylcholine receptor (TC 1.A.9.1) subfamily. As to quaternary structure, component of nicotinic acetylcholine receptor. In cholinergic motoneurons, composed of 2 non-alpha subunits acr-2 and acr-3, and 3 alpha subunits unc-38, unc-63 and acr-12.

Its subcellular location is the postsynaptic cell membrane. The protein resides in the cell membrane. In terms of biological role, non-alpha subunit of nicotinic acetylcholine receptor (nAChR). Probably acts in cholinergic motoneurons to regulate presynaptic neurotransmitter release, thereby ensuring normal level of excitation of cholinergic motoneurons during locomotion. This Caenorhabditis elegans protein is Acetylcholine receptor subunit beta-type acr-3 (acr-3).